Reading from the N-terminus, the 91-residue chain is Mercuric transport protein periplasmic component (91 aa).

Residues 1-19 form the signal peptide; sequence MKKLFASLAIAAVVAPVWA. Residues 22–88 enclose the HMA domain; sequence QTVTLSVPGM…ATEDAGYPSS (67 aa). The Hg(2+) site is built by Cys33 and Cys36.

The protein belongs to the MerP family. As to quaternary structure, monomer.

Its subcellular location is the periplasm. In terms of biological role, involved in mercury resistance. Acts as a mercury scavenger that specifically binds to a mercuric ion in the periplasm and probably passes it to the cytoplasmic mercuric reductase MerA via the mercuric transport protein MerT. The polypeptide is Mercuric transport protein periplasmic component (Serratia marcescens).